The primary structure comprises 139 residues: Maximins 4/H3 type 4 (139 aa).

The signal sequence occupies residues 1 to 18 (MNFKYIIAVSFLIASAYA). Positions 19–43 (RSVQNDEQSLSQRDVLEEESLREIR) are excised as a propeptide. Asparagine 70 is modified (asparagine amide). Residues 74-118 (TAEEHEVMKRLEAVMRDLDSLDHPEEASERETRGFNQDEIAKEKR) constitute a propeptide that is removed on maturation. Isoleucine 138 is subject to Isoleucine amide.

It belongs to the bombinin family. Expressed by the skin glands.

The protein localises to the secreted. In terms of biological role, maximin-4 shows antibacterial activity against both Gram-positive and Gram-negative bacteria. It also shows antimicrobial activity against the fungus C.albicans, but not against A.flavus nor P.uticale. It has little hemolytic activity. It does not possess a significant cytotoxicity against tumor cell lines. It does not possess a significant anti-HIV activity. Maximin-H3 shows antibacterial activity against both Gram-positive and Gram-negative bacteria. It also shows antimicrobial activity against the fungus C.albicans. Shows strong hemolytic activity. This chain is Maximins 4/H3 type 4, found in Bombina maxima (Giant fire-bellied toad).